The sequence spans 920 residues: Bifunctional aspartokinase/homoserine dehydrogenase 1, chloroplastic (920 aa).

The segment at 1–21 is disordered; sequence MRSLTVASRHPGAAFSTRRRP. Residues 1–92 constitute a chloroplast transit peptide; sequence MRSLTVASRH…EAIADLPKGD (92 aa). Residues 93 to 341 are aspartokinase; sequence MWSVHKFGGT…VSEAVILSTL (249 aa). Residues 342–566 form an interface region; that stretch reads SYQEAWEMSY…LSKTTLAVGI (225 aa). ACT domains are found at residues 416-491 and 497-574; these read VEGT…VIHN and TVGL…LIGR. The interval 567-920 is homoserine dehydrogenase; that stretch reads IGPGLIGRTL…RLSSYLGAPS (354 aa). The NAD(+) site is built by Ile-572 and Ala-601. Ile-572 contacts NADP(+). An NADPH-binding site is contributed by Ile-572. NADP(+) contacts are provided by Arg-604, Thr-653, and Lys-677. Thr-653 contacts NAD(+). NADPH is bound by residues Thr-653 and Lys-677. Na(+) contacts are provided by Glu-704, Val-707, Ala-709, and Leu-711. NADP(+) contacts are provided by Gly-762 and Glu-765. Positions 765 and 776 each coordinate L-homoserine. The active-site Proton donor is Lys-780. Gly-897 serves as a coordination point for NAD(+). NADP(+) is bound at residue Gly-897. Gly-897 serves as a coordination point for NADPH.

This sequence in the N-terminal section; belongs to the aspartokinase family. The protein in the C-terminal section; belongs to the homoserine dehydrogenase family. Homo- or heterodimer. It depends on a metal cation as a cofactor.

Its subcellular location is the plastid. The protein localises to the chloroplast. It carries out the reaction L-homoserine + NADP(+) = L-aspartate 4-semialdehyde + NADPH + H(+). It catalyses the reaction L-homoserine + NAD(+) = L-aspartate 4-semialdehyde + NADH + H(+). The catalysed reaction is L-aspartate + ATP = 4-phospho-L-aspartate + ADP. It functions in the pathway amino-acid biosynthesis; L-lysine biosynthesis via DAP pathway; (S)-tetrahydrodipicolinate from L-aspartate: step 1/4. Its pathway is amino-acid biosynthesis; L-methionine biosynthesis via de novo pathway; L-homoserine from L-aspartate: step 1/3. The protein operates within amino-acid biosynthesis; L-methionine biosynthesis via de novo pathway; L-homoserine from L-aspartate: step 3/3. It participates in amino-acid biosynthesis; L-threonine biosynthesis; L-threonine from L-aspartate: step 1/5. It functions in the pathway amino-acid biosynthesis; L-threonine biosynthesis; L-threonine from L-aspartate: step 3/5. Its function is as follows. Bifunctional aspartate kinase and homoserine dehydrogenase that catalyzes the first and the third steps toward the synthesis of lysine, methionine and threonine from aspartate. The chain is Bifunctional aspartokinase/homoserine dehydrogenase 1, chloroplastic (AKHSDH1) from Zea mays (Maize).